The chain runs to 106 residues: UPF0060 membrane protein Csal_2746 (106 aa).

Helical transmembrane passes span 6-26, 31-51, 59-79, and 85-105; these read LLFI…WLWL, SPWL…LLSL, VYAA…WGVD, and PTDW…ASGW.

This sequence belongs to the UPF0060 family.

The protein localises to the cell inner membrane. The chain is UPF0060 membrane protein Csal_2746 from Chromohalobacter salexigens (strain ATCC BAA-138 / DSM 3043 / CIP 106854 / NCIMB 13768 / 1H11).